A 439-amino-acid polypeptide reads, in one-letter code: Glutamate-1-semialdehyde 2,1-aminomutase (439 aa).

An N6-(pyridoxal phosphate)lysine modification is found at lysine 270.

This sequence belongs to the class-III pyridoxal-phosphate-dependent aminotransferase family. HemL subfamily. Homodimer. It depends on pyridoxal 5'-phosphate as a cofactor.

It is found in the cytoplasm. The catalysed reaction is (S)-4-amino-5-oxopentanoate = 5-aminolevulinate. It participates in porphyrin-containing compound metabolism; protoporphyrin-IX biosynthesis; 5-aminolevulinate from L-glutamyl-tRNA(Glu): step 2/2. In Kocuria rhizophila (strain ATCC 9341 / DSM 348 / NBRC 103217 / DC2201), this protein is Glutamate-1-semialdehyde 2,1-aminomutase.